Here is a 139-residue protein sequence, read N- to C-terminus: Putative pre-16S rRNA nuclease (139 aa).

It belongs to the YqgF nuclease family.

Its subcellular location is the cytoplasm. Functionally, could be a nuclease involved in processing of the 5'-end of pre-16S rRNA. This is Putative pre-16S rRNA nuclease from Streptococcus gordonii (strain Challis / ATCC 35105 / BCRC 15272 / CH1 / DL1 / V288).